Consider the following 880-residue polypeptide: Valine--tRNA ligase (880 aa).

Positions 48 to 58 (PNITGKLHLGH) match the 'HIGH' region motif. The short motif at 527-531 (KMSKS) is the 'KMSKS' region element. Lys530 provides a ligand contact to ATP. 2 coiled-coil regions span residues 717–741 (KEEL…AIRN) and 810–880 (LFDL…KSLK).

This sequence belongs to the class-I aminoacyl-tRNA synthetase family. ValS type 1 subfamily. As to quaternary structure, monomer.

It localises to the cytoplasm. It carries out the reaction tRNA(Val) + L-valine + ATP = L-valyl-tRNA(Val) + AMP + diphosphate. In terms of biological role, catalyzes the attachment of valine to tRNA(Val). As ValRS can inadvertently accommodate and process structurally similar amino acids such as threonine, to avoid such errors, it has a 'posttransfer' editing activity that hydrolyzes mischarged Thr-tRNA(Val) in a tRNA-dependent manner. This Clostridium tetani (strain Massachusetts / E88) protein is Valine--tRNA ligase.